A 295-amino-acid polypeptide reads, in one-letter code: uncharacterized protein (295 aa).

The Sigma-54 factor interaction domain maps to 4–233 (IVVKSMAMEK…LQNTIERLVL (230 aa)).

This is an uncharacterized protein from Pseudomonas sp. (strain NS671).